Consider the following 1404-residue polypeptide: MKDLLKFLKQQGKTEEFEGIKIGLASPDLIRSWSFGEVKKPETINYRTFKPEREGLFCARIFGPVKDYECLCGKYKRLKHRGVICEKCGVEVTQTKVRRERMGHIELASPVAHIWFLKSLPSRIGLMLDMTLRDIERVLYFESYVVIEPGMTSLERGQMLTEENYLDALEEYGDEFEAKMGAEAVLDLLRAIDLEKEIEQMREELPSINSETRRKKVTKRLKLIEAFYTSGNKPEWMILKVLPVLPPDLRPLVPLDGGRFATSDLNDLYRRVINRNNRLKRLLDLAAPDIIVRNEKRMLQESVDALLDNGRRGRAITGSNKRPLKSLADMIKGKQGRFRQNLLGKRVDYSGRSVITVGPTLRLHQCGLPKKMALELFKPFIYGKLEGRGLATTIKAAKKMVEREVAEVWDVLDEVIREHPVMLNRAPTLHRLGIQAFEPVLIEGKAIQLHPLVCAAYNADFDGDQMAVHVPLTLEAQLEARALMMSTNNILSPANGEPIIVPSQDVVLGLYYISRERVNGRGEAMAFESVAEAEKAYRVGAAELHARVKVRITETIIGENGERTKQRRIVDTTVGRAILSQILPAGLSFDLVNQDMGKKQISKLLNTCYRQLGLKDTVIFADQLMYTGFQYATISGASVGINDMVIPEEKYSLVADAEAEVIEIQEQFQSGLVTAGERYNKVIDIWASANEKVSKAMMENLSSETVINRHGEEEKQKSFNSIYMMADSGARGSAAQIRQLAGMRGLMAKPDGSIIETPIVANFREGLNVLQYFISTHGARKGLADTALKTANSGYLTRRLVDVAQDLVIIEDDCGATEGLSMKPLIEGGDVVEPLRERVLGRVVAEDVMYPGTDEVLAPRNTLLDEAWCDKLEQHSVDEVQVRSVITCETDFGVCAKCYGRDLARGHIINMGEAIGVVAAQSIGEPGTQLTMRTFHIGGAASRASAENSVQVKNAGTLKLHNAKYVTNSDGKLVIVSRSSELAIIDELGREKERYKVPYGTVLDTKEGAEVNAGQIIANWDPHTHPIITEVAGSIKFVDMIDGVTITRQTDELTGLSSIVVLDVGQRTSAGKEMRPAVRLVDDNGNDLTIPGTDVPAQYFLPGNAIVNLDDNAKISVGDALARIPQESSKTRDITGGLPRVADLFEARRPKEPAILAEISGTISFGKETKGKRRLVITPNDGGDAYEEMIPKWRNLNVFEGEKVERGEVIADGPESAHDILRLRGIHNVANYIVNEVQDVYRLQGVKINDKHIEVIIRQMLRKCIITQAGDSEFLEGEQVEVARVKIANRDLEAAGKQPAKFERELLGITKASLATESFISAASFQETTRVLTEAAVGGKSDNLRGLKENVIVGRLIPAGTGFAYHKNRAKARASGEETAAPTITASEAEQNLADLLNLAGSQE.

Zn(2+) is bound by residues cysteine 70, cysteine 72, cysteine 85, and cysteine 88. 3 residues coordinate Mg(2+): aspartate 460, aspartate 462, and aspartate 464. Zn(2+) contacts are provided by cysteine 814, cysteine 888, cysteine 895, and cysteine 898.

Belongs to the RNA polymerase beta' chain family. In terms of assembly, the RNAP catalytic core consists of 2 alpha, 1 beta, 1 beta' and 1 omega subunit. When a sigma factor is associated with the core the holoenzyme is formed, which can initiate transcription. Mg(2+) serves as cofactor. It depends on Zn(2+) as a cofactor.

It carries out the reaction RNA(n) + a ribonucleoside 5'-triphosphate = RNA(n+1) + diphosphate. Its function is as follows. DNA-dependent RNA polymerase catalyzes the transcription of DNA into RNA using the four ribonucleoside triphosphates as substrates. This is DNA-directed RNA polymerase subunit beta' from Shewanella amazonensis (strain ATCC BAA-1098 / SB2B).